Consider the following 203-residue polypeptide: Urease accessory protein UreG (203 aa).

Position 10 to 17 (10 to 17 (GPVGAGKT)) interacts with GTP.

Belongs to the SIMIBI class G3E GTPase family. UreG subfamily. In terms of assembly, homodimer. UreD, UreF and UreG form a complex that acts as a GTP-hydrolysis-dependent molecular chaperone, activating the urease apoprotein by helping to assemble the nickel containing metallocenter of UreC. The UreE protein probably delivers the nickel.

It is found in the cytoplasm. Its function is as follows. Facilitates the functional incorporation of the urease nickel metallocenter. This process requires GTP hydrolysis, probably effectuated by UreG. This chain is Urease accessory protein UreG, found in Micrococcus luteus (strain ATCC 4698 / DSM 20030 / JCM 1464 / CCM 169 / CCUG 5858 / IAM 1056 / NBRC 3333 / NCIMB 9278 / NCTC 2665 / VKM Ac-2230) (Micrococcus lysodeikticus).